Reading from the N-terminus, the 126-residue chain is Small ribosomal subunit protein eS6 (126 aa).

It belongs to the eukaryotic ribosomal protein eS6 family.

The chain is Small ribosomal subunit protein eS6 from Methanothermobacter thermautotrophicus (strain ATCC 29096 / DSM 1053 / JCM 10044 / NBRC 100330 / Delta H) (Methanobacterium thermoautotrophicum).